The chain runs to 93 residues: UPF0223 protein SAG0995 (93 aa).

Belongs to the UPF0223 family.

This Streptococcus agalactiae serotype V (strain ATCC BAA-611 / 2603 V/R) protein is UPF0223 protein SAG0995.